The following is a 630-amino-acid chain: 1-deoxy-D-xylulose-5-phosphate synthase (630 aa).

Residues His-72 and 113–115 each bind thiamine diphosphate; that span reads GHS. Residue Asp-144 participates in Mg(2+) binding. Residues 145–146, Asn-173, Tyr-284, and Glu-367 contribute to the thiamine diphosphate site; that span reads GA. Residue Asn-173 coordinates Mg(2+).

The protein belongs to the transketolase family. DXPS subfamily. As to quaternary structure, homodimer. Requires Mg(2+) as cofactor. The cofactor is thiamine diphosphate.

It carries out the reaction D-glyceraldehyde 3-phosphate + pyruvate + H(+) = 1-deoxy-D-xylulose 5-phosphate + CO2. It participates in metabolic intermediate biosynthesis; 1-deoxy-D-xylulose 5-phosphate biosynthesis; 1-deoxy-D-xylulose 5-phosphate from D-glyceraldehyde 3-phosphate and pyruvate: step 1/1. Catalyzes the acyloin condensation reaction between C atoms 2 and 3 of pyruvate and glyceraldehyde 3-phosphate to yield 1-deoxy-D-xylulose-5-phosphate (DXP). This is 1-deoxy-D-xylulose-5-phosphate synthase from Bacillus cereus (strain AH187).